The following is a 202-amino-acid chain: Large ribosomal subunit protein bL25 (202 aa).

The disordered stretch occupies residues 182–202; that stretch reads EVEAEETEDDEAASEGEEAAE. Over residues 183 to 202 the composition is skewed to acidic residues; that stretch reads VEAEETEDDEAASEGEEAAE.

This sequence belongs to the bacterial ribosomal protein bL25 family. CTC subfamily. Part of the 50S ribosomal subunit; part of the 5S rRNA/L5/L18/L25 subcomplex. Contacts the 5S rRNA. Binds to the 5S rRNA independently of L5 and L18.

In terms of biological role, this is one of the proteins that binds to the 5S RNA in the ribosome where it forms part of the central protuberance. This Corynebacterium glutamicum (strain R) protein is Large ribosomal subunit protein bL25.